A 442-amino-acid chain; its full sequence is Probable carboxypeptidase PADG_04062 (442 aa).

The first 20 residues, 1–20 (MKLQYLVALLSVQAVPPVTA), serve as a signal peptide directing secretion. Residue N102 is glycosylated (N-linked (GlcNAc...) asparagine). D160 contributes to the Zn(2+) binding site. Catalysis depends on E192, which acts as the Proton acceptor. E193 contacts Zn(2+). N-linked (GlcNAc...) asparagine glycosylation occurs at N343.

The protein belongs to the peptidase M20A family. Zn(2+) serves as cofactor.

Its subcellular location is the secreted. The polypeptide is Probable carboxypeptidase PADG_04062 (Paracoccidioides brasiliensis (strain Pb18)).